Here is a 1104-residue protein sequence, read N- to C-terminus: Isoleucine--tRNA ligase (1104 aa).

The 'HIGH' region signature appears at 48–58 (PYTTGRIHLGT). The 'KMSKS' region motif lies at 644 to 648 (KMSKS). ATP is bound at residue K647.

This sequence belongs to the class-I aminoacyl-tRNA synthetase family. IleS type 2 subfamily. As to quaternary structure, monomer. It depends on Zn(2+) as a cofactor.

Its subcellular location is the cytoplasm. It catalyses the reaction tRNA(Ile) + L-isoleucine + ATP = L-isoleucyl-tRNA(Ile) + AMP + diphosphate. Catalyzes the attachment of isoleucine to tRNA(Ile). As IleRS can inadvertently accommodate and process structurally similar amino acids such as valine, to avoid such errors it has two additional distinct tRNA(Ile)-dependent editing activities. One activity is designated as 'pretransfer' editing and involves the hydrolysis of activated Val-AMP. The other activity is designated 'posttransfer' editing and involves deacylation of mischarged Val-tRNA(Ile). This chain is Isoleucine--tRNA ligase, found in Methanocella arvoryzae (strain DSM 22066 / NBRC 105507 / MRE50).